The primary structure comprises 155 residues: Lipoprotein signal peptidase (155 aa).

Transmembrane regions (helical) follow at residues 52–72 (ILQGQMWFFYVITLVVIAGIV) and 85–105 (LGVALALMLGGAIGNFIDRVF). Active-site residues include D111 and D129. The chain crosses the membrane as a helical span at residues 124-144 (IFNIADSSLCVGVILLFIQML).

It belongs to the peptidase A8 family.

The protein localises to the cell membrane. The enzyme catalyses Release of signal peptides from bacterial membrane prolipoproteins. Hydrolyzes -Xaa-Yaa-Zaa-|-(S,diacylglyceryl)Cys-, in which Xaa is hydrophobic (preferably Leu), and Yaa (Ala or Ser) and Zaa (Gly or Ala) have small, neutral side chains.. The protein operates within protein modification; lipoprotein biosynthesis (signal peptide cleavage). In terms of biological role, this protein specifically catalyzes the removal of signal peptides from prolipoproteins. The sequence is that of Lipoprotein signal peptidase from Bacillus pumilus (strain SAFR-032).